The chain runs to 263 residues: MEDLDHEYKNYWETTMFFQNQELEFDSWPMEEAFSGSGESSSPDGAATSPASSKNVVSERNRRQKLNQRLFALRSVVPNISKLDKASVIKDSIDYMQELIDQEKTLEAEIRELESRSTLLENPVRDYDCNFAETHLQDFSDNNDMRSKKFKQMDYSTRVQHYPIEVLEMKVTWMGEKTVVVCITCSKKRETMVQLCKVLESLNLNILTTNFSSFTSRLSTTLFLQVTLSLSPSLISLFGNVITSTNYKILNASREYCTCLVLV.

Residues 32–47 (EAFSGSGESSSPDGAA) show a composition bias toward low complexity. Residues 32–61 (EAFSGSGESSSPDGAATSPASSKNVVSERN) form a disordered region. The span at 49–58 (SPASSKNVVS) shows a compositional bias: polar residues. One can recognise a bHLH domain in the interval 50-99 (PASSKNVVSERNRRQKLNQRLFALRSVVPNISKLDKASVIKDSIDYMQEL).

In terms of assembly, homodimer. In terms of tissue distribution, expressed constitutively in roots, leaves, stems, and flowers.

It is found in the nucleus. This is Transcription factor bHLH27 (BHLH27) from Arabidopsis thaliana (Mouse-ear cress).